A 158-amino-acid chain; its full sequence is 6,7-dimethyl-8-ribityllumazine synthase (158 aa).

Residues F22, 57–59 (AVE), and 81–83 (AVI) contribute to the 5-amino-6-(D-ribitylamino)uracil site. 86 to 87 (GT) is a binding site for (2S)-2-hydroxy-3-oxobutyl phosphate. H89 functions as the Proton donor in the catalytic mechanism. A 5-amino-6-(D-ribitylamino)uracil-binding site is contributed by F114. R128 serves as a coordination point for (2S)-2-hydroxy-3-oxobutyl phosphate.

It belongs to the DMRL synthase family. In terms of assembly, forms an icosahedral capsid composed of 60 subunits, arranged as a dodecamer of pentamers.

It carries out the reaction (2S)-2-hydroxy-3-oxobutyl phosphate + 5-amino-6-(D-ribitylamino)uracil = 6,7-dimethyl-8-(1-D-ribityl)lumazine + phosphate + 2 H2O + H(+). It functions in the pathway cofactor biosynthesis; riboflavin biosynthesis; riboflavin from 2-hydroxy-3-oxobutyl phosphate and 5-amino-6-(D-ribitylamino)uracil: step 1/2. Its function is as follows. Catalyzes the formation of 6,7-dimethyl-8-ribityllumazine by condensation of 5-amino-6-(D-ribitylamino)uracil with 3,4-dihydroxy-2-butanone 4-phosphate. This is the penultimate step in the biosynthesis of riboflavin. The chain is 6,7-dimethyl-8-ribityllumazine synthase from Shewanella halifaxensis (strain HAW-EB4).